The primary structure comprises 1227 residues: Codanin-1 (1227 aa).

Position 2 is an N-acetylalanine (A2). Residues 63 to 294 (RVLPQGPPTP…SLTDEPADPA (232 aa)) form a disordered region. Phosphothreonine is present on T71. Over residues 128–137 (ARERGGRGLE) the composition is skewed to basic and acidic residues. Low complexity predominate over residues 155–167 (GSGSPSRPSLTLS). The tract at residues 188 to 208 (PTGTKPSRRINPTPVSEERSL) is interaction with ASF1A/B. Positions 214-232 (CFTSPPISCVPSSQPSALD) are enriched in polar residues. Positions 247 to 260 (LQEEREMLRKERSK) are enriched in basic and acidic residues. 2 positions are modified to phosphoserine: S265 and S285. The next 2 helical transmembrane spans lie at 312 to 332 (CIAE…FQLL) and 626 to 646 (FAVV…VAFL).

As to quaternary structure, found in a cytosolic complex with ASF1A, ASF1B, IPO4 and histones H3.1 and H4. Ubiquitously expressed. Isoform 3 is not found in erythroid cells.

It localises to the cytoplasm. It is found in the nucleus. Its subcellular location is the membrane. In terms of biological role, may act as a negative regulator of ASF1 in chromatin assembly. In Homo sapiens (Human), this protein is Codanin-1 (CDAN1).